The primary structure comprises 361 residues: tRNA-specific 2-thiouridylase MnmA (361 aa).

Residues 6-13 (LVSGGVDS) and Ile32 each bind ATP. Residues 93 to 95 (NPD) form an interaction with target base in tRNA region. Cys98 serves as the catalytic Nucleophile. Cys98 and Cys193 form a disulfide bridge. Gly121 contacts ATP. An interaction with tRNA region spans residues 143–145 (KDQ). Cys193 acts as the Cysteine persulfide intermediate in catalysis.

It belongs to the MnmA/TRMU family.

It is found in the cytoplasm. It catalyses the reaction S-sulfanyl-L-cysteinyl-[protein] + uridine(34) in tRNA + AH2 + ATP = 2-thiouridine(34) in tRNA + L-cysteinyl-[protein] + A + AMP + diphosphate + H(+). Its function is as follows. Catalyzes the 2-thiolation of uridine at the wobble position (U34) of tRNA, leading to the formation of s(2)U34. The polypeptide is tRNA-specific 2-thiouridylase MnmA (Porphyromonas gingivalis (strain ATCC BAA-308 / W83)).